The primary structure comprises 543 residues: Membrane protein insertase YidC (543 aa).

A helical membrane pass occupies residues 7–27 (FLLIGLAMVSFLLWQQWQVDY). Positions 30–61 (QPAQPVESQQTTGSDAPNSNGDVPIATPTNKS) are disordered. The span at 35-61 (VESQQTTGSDAPNSNGDVPIATPTNKS) shows a compositional bias: polar residues. The next 4 membrane-spanning stretches (helical) occupy residues 341 to 361 (FAFL…IILI), 421 to 441 (GGCF…WVLL), 451 to 471 (FIFW…PILT), and 499 to 519 (PVAM…YWLI).

Belongs to the OXA1/ALB3/YidC family. Type 1 subfamily. As to quaternary structure, interacts with the Sec translocase complex via SecD. Specifically interacts with transmembrane segments of nascent integral membrane proteins during membrane integration.

Its subcellular location is the cell inner membrane. In terms of biological role, required for the insertion and/or proper folding and/or complex formation of integral membrane proteins into the membrane. Involved in integration of membrane proteins that insert both dependently and independently of the Sec translocase complex, as well as at least some lipoproteins. Aids folding of multispanning membrane proteins. The protein is Membrane protein insertase YidC of Pseudoalteromonas atlantica (strain T6c / ATCC BAA-1087).